Consider the following 487-residue polypeptide: Acetyl-coenzyme A carboxylase carboxyl transferase subunit beta, chloroplastic (487 aa).

Positions Leu-223–Asn-487 constitute a CoA carboxyltransferase N-terminal domain. Zn(2+) is bound by residues Cys-227, Cys-230, Cys-246, and Cys-249. A C4-type zinc finger spans residues Cys-227 to Cys-249.

It belongs to the AccD/PCCB family. Acetyl-CoA carboxylase is a heterohexamer composed of biotin carboxyl carrier protein, biotin carboxylase and 2 subunits each of ACCase subunit alpha and ACCase plastid-coded subunit beta (accD). Zn(2+) is required as a cofactor.

The protein resides in the plastid. It is found in the chloroplast stroma. It carries out the reaction N(6)-carboxybiotinyl-L-lysyl-[protein] + acetyl-CoA = N(6)-biotinyl-L-lysyl-[protein] + malonyl-CoA. Its pathway is lipid metabolism; malonyl-CoA biosynthesis; malonyl-CoA from acetyl-CoA: step 1/1. In terms of biological role, component of the acetyl coenzyme A carboxylase (ACC) complex. Biotin carboxylase (BC) catalyzes the carboxylation of biotin on its carrier protein (BCCP) and then the CO(2) group is transferred by the transcarboxylase to acetyl-CoA to form malonyl-CoA. The sequence is that of Acetyl-coenzyme A carboxylase carboxyl transferase subunit beta, chloroplastic from Panax ginseng (Korean ginseng).